Here is a 672-residue protein sequence, read N- to C-terminus: Inner kinetochore subunit mis6 (672 aa).

Belongs to the CENP-I/CTF3 family. In terms of assembly, component of the inner kinetochore constitutive centromere-associated network (CCAN) (also known as central kinetochore Sim4 complex in fission yeast), which is composed of at least cnl2, cnp3, cnp20, fta1, fta2, fta3, fta4, fta6, fta7, mal2, mhf1, mhf2, mis6, mis15, mis17, sim4 and wip1. Interacts with cnp1, sim4, mis15 and mis17.

It is found in the nucleus. The protein resides in the chromosome. Its subcellular location is the centromere. Component of the kinetochore, a multiprotein complex that assembles on centromeric DNA and attaches chromosomes to spindle microtubules, mediating chromosome segregation and sister chromatid segregation during meiosis and mitosis. Component of the inner kinetochore constitutive centromere-associated network (CCAN), which serves as a structural platform for outer kinetochore assembly. Required for the localization of cnp1 to the centromere. The sequence is that of Inner kinetochore subunit mis6 (mis6) from Schizosaccharomyces pombe (strain 972 / ATCC 24843) (Fission yeast).